A 218-amino-acid chain; its full sequence is MRLSQSVLTALLICVNSAAFANVEVTLPSNSELVLVNGKESDSTDKLTLENGENQLALRYIGRYQQQGSQTQFSSDVIIMTFLAENTSLTIALPRIRSNSAADAFNRDPKISLKNSSEVDIAFRQDKLLKEGMQLGRDYEKEVAEYNSNNQVASVAALAPSITALVQAKPVVIENHGQPKNTINQSDQVNVGQMLDFWYQQADEETRKAFKLKINSKE.

Residues 1-21 (MRLSQSVLTALLICVNSAAFA) form the signal peptide.

Belongs to the UPF0319 family.

This chain is UPF0319 protein swp_2242, found in Shewanella piezotolerans (strain WP3 / JCM 13877).